The following is a 553-amino-acid chain: CTP synthase (553 aa).

The segment at 1–277 is amidoligase domain; the sequence is MPTEPETDYD…DQYVMEELDI (277 aa). A CTP-binding site is contributed by serine 26. UTP is bound at residue serine 26. Residues 27–32 and aspartate 84 each bind ATP; that span reads GLGKGI. Aspartate 84 and glutamate 152 together coordinate Mg(2+). CTP-binding positions include 159–161, 198–203, and lysine 234; these read DIE and KTKPTQ. UTP contacts are provided by residues 198–203 and lysine 234; that span reads KTKPTQ. Position 252 (valine 252) interacts with ATP. Residues 307 to 544 form the Glutamine amidotransferase type-1 domain; sequence LVGKYDLEDA…LEAVLGDDPH (238 aa). Glycine 364 contributes to the L-glutamine binding site. Residue cysteine 391 is the Nucleophile; for glutamine hydrolysis of the active site. Residues 392-395, glutamate 415, and arginine 472 each bind L-glutamine; that span reads LGFQ. Catalysis depends on residues histidine 517 and glutamate 519.

Belongs to the CTP synthase family. Homotetramer.

Its subcellular location is the cytoplasm. It catalyses the reaction UTP + L-glutamine + ATP + H2O = CTP + L-glutamate + ADP + phosphate + 2 H(+). It carries out the reaction L-glutamine + H2O = L-glutamate + NH4(+). The enzyme catalyses UTP + NH4(+) + ATP = CTP + ADP + phosphate + 2 H(+). It participates in pyrimidine metabolism; CTP biosynthesis via de novo pathway; CTP from UDP: step 2/2. With respect to regulation, allosterically activated by GTP, when glutamine is the substrate; GTP has no effect on the reaction when ammonia is the substrate. The allosteric effector GTP functions by stabilizing the protein conformation that binds the tetrahedral intermediate(s) formed during glutamine hydrolysis. Inhibited by the product CTP, via allosteric rather than competitive inhibition. Inhibited by 6-diazo-5-oxo-l-norleucine (DON). Catalyzes the ATP-dependent amination of UTP to CTP with either L-glutamine or ammonia as the source of nitrogen. Regulates intracellular CTP levels through interactions with the four ribonucleotide triphosphates. The chain is CTP synthase from Haloarcula hispanica (strain ATCC 33960 / DSM 4426 / JCM 8911 / NBRC 102182 / NCIMB 2187 / VKM B-1755).